The primary structure comprises 153 residues: Histone H2B.8 (153 aa).

2 stretches are compositionally biased toward basic and acidic residues: residues 1–28 (MAPKAEKKPAAKKPAEEEPAAEKAEKAP) and 36–53 (EKRLPAGKGEKGSGEGKK). The tract at residues 1–61 (MAPKAEKKPA…KKAGRKKAKK (61 aa)) is disordered. 2 positions are modified to N6-acetyllysine: K7 and K37. A Glycyl lysine isopeptide (Lys-Gly) (interchain with G-Cter in ubiquitin) cross-link involves residue K149.

The protein belongs to the histone H2B family. In terms of assembly, the nucleosome is a histone octamer containing two molecules each of H2A, H2B, H3 and H4 assembled in one H3-H4 heterotetramer and two H2A-H2B heterodimers. The octamer wraps approximately 147 bp of DNA. Post-translationally, can be acetylated to form H2BK6ac and H2BK33ac. In terms of processing, monoubiquitinated by BRE1 to form H2BK143ub1 and deubiquitinated by UBP26. Required for heterochromatic histone H3 di- and trimethylation at H3K4me. May give a specific tag for epigenetic transcriptional activation.

It localises to the nucleus. The protein localises to the chromosome. Core component of nucleosome. Nucleosomes wrap and compact DNA into chromatin, limiting DNA accessibility to the cellular machineries which require DNA as a template. Histones thereby play a central role in transcription regulation, DNA repair, DNA replication and chromosomal stability. DNA accessibility is regulated via a complex set of post-translational modifications of histones, also called histone code, and nucleosome remodeling. This chain is Histone H2B.8 (H2B.8), found in Oryza sativa subsp. indica (Rice).